The chain runs to 1092 residues: Rho GTPase-activating protein 7 (1092 aa).

One can recognise an SAM domain in the interval 11 to 78 (LTQIEAKEAC…LNKCAVMKLE (68 aa)). Phosphoserine occurs at positions 86, 89, and 129. Disordered stretches follow at residues 121–179 (PKQD…DATT), 297–330 (RSVS…TRSL), 409–434 (GPGH…NSSS), and 492–553 (SDEG…SGVG). Residues 130–143 (PDNSRLQSATSHES) show a composition bias toward polar residues. Composition is skewed to low complexity over residues 154 to 174 (VASV…AAHS) and 299 to 325 (VSNS…SPVT). A focal adhesion-targeting (FAT) region spans residues 275–448 (QLNCVEISAL…RLSIYDNVPG (174 aa)). Position 322 is a phosphoserine (Ser-322). Residues 415–426 (LRRENSHDSPKE) show a composition bias toward basic and acidic residues. Residues 500–512 (ALDSVSPCPSSPK) show a composition bias toward polar residues. Positions 514–526 (IHLDVDHDRRTPS) are enriched in basic and acidic residues. Residues 527–536 (DLDSTGNSLN) are compositionally biased toward polar residues. The tract at residues 615–637 (KHGFSWAVPKFMKRIKVPDYKDR) is polybasic cluster (PBR). Positions 642–848 (VPLTVNVQRS…HMIAECKKLF (207 aa)) constitute a Rho-GAP domain. Residues 878 to 1085 (NSDQPADYRH…RDSFSNQNTE (208 aa)) form the START domain.

As to quaternary structure, interacts with EF1A1, facilitates EF1A1 distribution to the membrane periphery and ruffles upon growth factor stimulation and suppresses cell migration. Interacts with tensin TNS1 (via N-terminus); the interaction is decreased by phosphorylation of TNS1. Interacts with TNS3 and PTEN; in resting cells, interacts with TNS3 (via C2 tensin-type domain) but, following growth factor stimulation, TNS3 and PTEN are phosphorylated which leads to weakened interaction with TNS3 and enhanced interaction with PTEN. Interacts (via C-terminus) with tensin TNS4 (via SH2 domain); the interaction is independent of tyrosine phosphorylation of DLC1. Widely expressed with the highest levels in heart, liver and lung.

It is found in the cytoplasm. The protein resides in the cell junction. The protein localises to the focal adhesion. It localises to the membrane. Its function is as follows. Functions as a GTPase-activating protein for the small GTPases RHOA, RHOB, RHOC and CDC42, terminating their downstream signaling. This induces morphological changes and detachment through cytoskeletal reorganization, playing a critical role in biological processes such as cell migration and proliferation. Also functions in vivo as an activator of the phospholipase PLCD1. Active DLC1 increases cell migration velocity but reduces directionality. Required for growth factor-induced epithelial cell migration; in resting cells, interacts with TNS3 while PTEN interacts with the p85 regulatory subunit of the PI3K kinase complex but growth factor stimulation induces phosphorylation of TNS3 and PTEN, causing them to change their binding preference so that PTEN interacts with DLC1 and TNS3 interacts with p85. The PTEN-DLC1 complex translocates to the posterior of migrating cells to activate RHOA while the TNS3-p85 complex translocates to the leading edge of migrating cells to promote RAC1 activation. The chain is Rho GTPase-activating protein 7 (Dlc1) from Mus musculus (Mouse).